The sequence spans 231 residues: MSELPQYKKDFLKSAIDGNILKFGSFLLKSGRTSPYFFNAGDFYRADLLNSISTAYALTIDSLPIQYDIIFGPAYKGIPLATAATIKLGQIRPRAKYAVGRVLVRDRKEAKDHGEGGNIVGAPLKGKRVLIVDDVISRCTAKREPSPRLEKEGGIVAGIVVALDRMEKLPAKDGDDSKPGPSALGELKKEYNLPIYAILTLDDIIEGIKGLVGEEDIKRTEEYREKYKATD.

Position 29 (Lys29) interacts with 5-phospho-alpha-D-ribose 1-diphosphate. 37-38 (FF) lines the orotate pocket. 5-phospho-alpha-D-ribose 1-diphosphate is bound by residues 75–76 (YK), Arg107, Lys108, Lys111, His113, and 133–141 (DDVISRCTA). 2 residues coordinate orotate: Ser137 and Arg165.

Belongs to the purine/pyrimidine phosphoribosyltransferase family. PyrE subfamily. In terms of assembly, homodimer.

It carries out the reaction orotidine 5'-phosphate + diphosphate = orotate + 5-phospho-alpha-D-ribose 1-diphosphate. The protein operates within pyrimidine metabolism; UMP biosynthesis via de novo pathway; UMP from orotate: step 1/2. Functionally, catalyzes the transfer of a ribosyl phosphate group from 5-phosphoribose 1-diphosphate to orotate, leading to the formation of orotidine monophosphate (OMP). This is Orotate phosphoribosyltransferase (URA5) from Podospora anserina (Pleurage anserina).